The chain runs to 180 residues: Ribulose bisphosphate carboxylase small subunit, chloroplastic (180 aa).

Residues 1–56 constitute a chloroplast transit peptide; that stretch reads MASSIMSSAAVATRSNGAQASMVAPFTGLKSNASFPVSRKTNLDITSIASNGGRVR.

This sequence belongs to the RuBisCO small chain family. As to quaternary structure, heterohexadecamer of 8 large and 8 small subunits.

The protein resides in the plastid. The protein localises to the chloroplast. In terms of biological role, ruBisCO catalyzes two reactions: the carboxylation of D-ribulose 1,5-bisphosphate, the primary event in carbon dioxide fixation, as well as the oxidative fragmentation of the pentose substrate. Both reactions occur simultaneously and in competition at the same active site. Although the small subunit is not catalytic it is essential for maximal activity. The sequence is that of Ribulose bisphosphate carboxylase small subunit, chloroplastic from Stellaria longipes (Longstalk starwort).